Reading from the N-terminus, the 242-residue chain is Methylthioribulose-1-phosphate dehydratase (242 aa).

Cysteine 97 contributes to the substrate binding site. Residues histidine 115 and histidine 117 each contribute to the Zn(2+) site. Glutamate 139 (proton donor/acceptor) is an active-site residue. Zn(2+) is bound at residue histidine 195.

This sequence belongs to the aldolase class II family. MtnB subfamily. As to quaternary structure, homotetramer. Interacts with APAF1. May interact with CASP1. Requires Zn(2+) as cofactor.

It localises to the cytoplasm. It carries out the reaction 5-(methylsulfanyl)-D-ribulose 1-phosphate = 5-methylsulfanyl-2,3-dioxopentyl phosphate + H2O. The protein operates within amino-acid biosynthesis; L-methionine biosynthesis via salvage pathway; L-methionine from S-methyl-5-thio-alpha-D-ribose 1-phosphate: step 2/6. Its function is as follows. Catalyzes the dehydration of methylthioribulose-1-phosphate (MTRu-1-P) into 2,3-diketo-5-methylthiopentyl-1-phosphate (DK-MTP-1-P). Functions in the methionine salvage pathway, which plays a key role in cancer, apoptosis, microbial proliferation and inflammation. May inhibit the CASP1-related inflammatory response (pyroptosis), the CASP9-dependent apoptotic pathway and the cytochrome c-dependent and APAF1-mediated cell death. This Bos taurus (Bovine) protein is Methylthioribulose-1-phosphate dehydratase.